The following is a 322-amino-acid chain: UDP-N-acetylenolpyruvoylglucosamine reductase (322 aa).

Residues 36–202 form the FAD-binding PCMH-type domain; it reads RAGGPAQVLF…TSVLFEGVPG (167 aa). Arg-182 is an active-site residue. The active-site Proton donor is the Ser-231. Glu-301 is an active-site residue.

Belongs to the MurB family. Requires FAD as cofactor.

It is found in the cytoplasm. It carries out the reaction UDP-N-acetyl-alpha-D-muramate + NADP(+) = UDP-N-acetyl-3-O-(1-carboxyvinyl)-alpha-D-glucosamine + NADPH + H(+). It participates in cell wall biogenesis; peptidoglycan biosynthesis. Cell wall formation. This chain is UDP-N-acetylenolpyruvoylglucosamine reductase, found in Brucella suis (strain ATCC 23445 / NCTC 10510).